A 454-amino-acid chain; its full sequence is Tubulin beta-2 chain (454 aa).

Residues Q11, E69, S138, G142, T143, G144, N204, and N226 each contribute to the GTP site. A Mg(2+)-binding site is contributed by E69. Residues 426–454 are disordered; it reads QEASVDDEAMEDDAEAEGGAGQNEAVEEF. The span at 429–441 shows a compositional bias: acidic residues; that stretch reads SVDDEAMEDDAEA.

The protein belongs to the tubulin family. In terms of assembly, dimer of alpha and beta chains. A typical microtubule is a hollow water-filled tube with an outer diameter of 25 nm and an inner diameter of 15 nM. Alpha-beta heterodimers associate head-to-tail to form protofilaments running lengthwise along the microtubule wall with the beta-tubulin subunit facing the microtubule plus end conferring a structural polarity. Microtubules usually have 13 protofilaments but different protofilament numbers can be found in some organisms and specialized cells. It depends on Mg(2+) as a cofactor.

It localises to the cytoplasm. The protein resides in the cytoskeleton. Its subcellular location is the spindle. It is found in the nucleus. Functionally, tubulin is the major constituent of microtubules, a cylinder consisting of laterally associated linear protofilaments composed of alpha- and beta-tubulin heterodimers. Microtubules grow by the addition of GTP-tubulin dimers to the microtubule end, where a stabilizing cap forms. Below the cap, tubulin dimers are in GDP-bound state, owing to GTPase activity of alpha-tubulin. This is the major beta tubulin of mitotic spindle. The chain is Tubulin beta-2 chain (BETC) from Physarum polycephalum (Slime mold).